Here is a 286-residue protein sequence, read N- to C-terminus: Release factor glutamine methyltransferase (286 aa).

S-adenosyl-L-methionine is bound by residues 121-125 (GTGTG), D144, W172, and N188. Substrate is bound at residue 188-191 (NPPY).

Belongs to the protein N5-glutamine methyltransferase family. PrmC subfamily.

The enzyme catalyses L-glutaminyl-[peptide chain release factor] + S-adenosyl-L-methionine = N(5)-methyl-L-glutaminyl-[peptide chain release factor] + S-adenosyl-L-homocysteine + H(+). Its function is as follows. Methylates the class 1 translation termination release factors RF1/PrfA and RF2/PrfB on the glutamine residue of the universally conserved GGQ motif. In Vibrio cholerae serotype O1 (strain ATCC 39315 / El Tor Inaba N16961), this protein is Release factor glutamine methyltransferase.